A 240-amino-acid polypeptide reads, in one-letter code: Glutathione S-transferase theta-1 (240 aa).

The region spanning 2–82 (GLELYLDLLS…YLTRKYKVPD (81 aa)) is the GST N-terminal domain. Glutathione-binding positions include histidine 40, 53 to 54 (KV), and 66 to 67 (ES). Residues 88–220 (DLQARARVDE…HEVILKAKDF (133 aa)) enclose the GST C-terminal domain.

This sequence belongs to the GST superfamily. Theta family. In terms of assembly, homodimer. Found in erythrocyte. Expressed at low levels in liver. In lung, expressed at low levels in club cells and ciliated cells at the alveolar/bronchiolar junction. Absent from epithelial cells of larger bronchioles.

It is found in the cytoplasm. The catalysed reaction is RX + glutathione = an S-substituted glutathione + a halide anion + H(+). Its function is as follows. Conjugation of reduced glutathione to a wide number of exogenous and endogenous hydrophobic electrophiles. Acts on 1,2-epoxy-3-(4-nitrophenoxy)propane, phenethylisothiocyanate 4-nitrobenzyl chloride and 4-nitrophenethyl bromide. Displays glutathione peroxidase activity with cumene hydroperoxide. This is Glutathione S-transferase theta-1 (GSTT1) from Homo sapiens (Human).